We begin with the raw amino-acid sequence, 303 residues long: Ornithine carbamoyltransferase (303 aa).

Carbamoyl phosphate is bound by residues 52–55, Q79, R103, and 130–133; these read STRT and HPCQ. Residues N161, D222, and 226–227 contribute to the L-ornithine site; that span reads SM. Carbamoyl phosphate-binding positions include 262 to 263 and R290; that span reads CL.

The protein belongs to the aspartate/ornithine carbamoyltransferase superfamily. OTCase family.

The protein localises to the cytoplasm. It catalyses the reaction carbamoyl phosphate + L-ornithine = L-citrulline + phosphate + H(+). It participates in amino-acid biosynthesis; L-arginine biosynthesis; L-arginine from L-ornithine and carbamoyl phosphate: step 1/3. Functionally, reversibly catalyzes the transfer of the carbamoyl group from carbamoyl phosphate (CP) to the N(epsilon) atom of ornithine (ORN) to produce L-citrulline. In Geobacter sulfurreducens (strain ATCC 51573 / DSM 12127 / PCA), this protein is Ornithine carbamoyltransferase.